The primary structure comprises 181 residues: NADH-quinone oxidoreductase subunit I (181 aa).

4Fe-4S ferredoxin-type domains follow at residues 51 to 80 (TRNS…LKKS) and 90 to 119 (KSFQ…LTPD). [4Fe-4S] cluster is bound by residues C60, C63, C66, C70, C99, C102, C105, and C109.

Belongs to the complex I 23 kDa subunit family. In terms of assembly, NDH-1 is composed of 13 different subunits. Subunits NuoA, H, J, K, L, M, N constitute the membrane sector of the complex. [4Fe-4S] cluster is required as a cofactor.

The protein resides in the cell membrane. The enzyme catalyses a quinone + NADH + 5 H(+)(in) = a quinol + NAD(+) + 4 H(+)(out). Its function is as follows. NDH-1 shuttles electrons from NADH, via FMN and iron-sulfur (Fe-S) centers, to quinones in the respiratory chain. The immediate electron acceptor for the enzyme in this species is believed to be ubiquinone. Couples the redox reaction to proton translocation (for every two electrons transferred, four hydrogen ions are translocated across the cytoplasmic membrane), and thus conserves the redox energy in a proton gradient. The polypeptide is NADH-quinone oxidoreductase subunit I (Buchnera aphidicola subsp. Cinara cedri (strain Cc)).